Here is a 485-residue protein sequence, read N- to C-terminus: TSSTARKTPEKDSLKQDQNQLLKTPIQTNGNQQSTFDSGEDSHSMPDSDLLEPVITDGADVDDENDAEEDDDIRTPKINSHGKMKTYKCKQCDFIAVTKLSFWEHNRIHIKPEKMLKCQKCPFITEYKHHLEYHLRNHNGSKPFQCKQCNYSCVNKSMLNSHMKSHSNIYQYRCKDCNYATKYCHSLKLHLRKYSHNPPMVLNYDGTPNPLRIIDVYGTRRGPKVKFHKDEGGHNLLNSNINTSRRSKSGKRDSFPNFEQSQHVPTPPSSQALAMLPNLANIFQQSPSMPLFPYLNLNFHHILAQQKAALSQISPSINGWQNEENCNEEETPEKEEDPKRMSALDLSSNPSTPSTVSQVKHKRKGRAFKLELMKESSDDDEGQTIRTLGEIRSELETPKPVQLQLPTSSTTTPLKTTSEDDSTSVEPLQNLYECKFCDISFKHAVLYTIHMGYHGYNDVFKCNACGKKCEDRVAFFLHIARDAHA.

The interval 1-77 (TSSTARKTPE…EEDDDIRTPK (77 aa)) is disordered. The segment covering 16 to 37 (QDQNQLLKTPIQTNGNQQSTFD) has biased composition (polar residues). Residues 59–72 (ADVDDENDAEEDDD) show a composition bias toward acidic residues. C2H2-type zinc fingers lie at residues 87–109 (YKCK…NRIH), 116–138 (LKCQ…LRNH), 144–166 (FQCK…MKSH), and 172–196 (YRCK…KYSH). 3 disordered regions span residues 229-270 (KDEG…PPSS), 318-361 (NGWQ…QVKH), and 398-422 (PKPV…EDDS). Residues 257-270 (NFEQSQHVPTPPSS) are compositionally biased toward polar residues. The segment covering 325–335 (NCNEEETPEKE) has biased composition (acidic residues). Polar residues predominate over residues 345–358 (DLSSNPSTPSTVSQ). Residues 402–416 (QLQLPTSSTTTPLKT) are compositionally biased toward low complexity. 2 C2H2-type zinc fingers span residues 432-454 (YECK…MGYH) and 460-484 (FKCN…RDAH).

This sequence belongs to the hunchback C2H2-type zinc-finger protein family.

It is found in the nucleus. Functionally, gap class segmentation protein that controls development of head structures. The sequence is that of Protein hunchback (hb) from Clogmia albipunctata (Mothmidge).